A 41-amino-acid chain; its full sequence is Photosystem I reaction center subunit IX (41 aa).

The helical transmembrane segment at 7 to 27 (YLSTAPVVAFAWITITAGLLI) threads the bilayer.

This sequence belongs to the PsaJ family.

Its subcellular location is the plastid. It is found in the chloroplast thylakoid membrane. Its function is as follows. May help in the organization of the PsaE and PsaF subunits. The polypeptide is Photosystem I reaction center subunit IX (Oedogonium cardiacum (Filamentous green alga)).